A 552-amino-acid polypeptide reads, in one-letter code: Urocanate hydratase (552 aa).

NAD(+) contacts are provided by residues 49–50 (GG), Gln127, 173–175 (GMG), Asp193, 239–240 (NA), 260–264 (QTSAH), 270–271 (YI), and Tyr319. Residue Cys407 is part of the active site. Residue Gly489 coordinates NAD(+).

It belongs to the urocanase family. NAD(+) serves as cofactor.

It localises to the cytoplasm. It catalyses the reaction 4-imidazolone-5-propanoate = trans-urocanate + H2O. Its pathway is amino-acid degradation; L-histidine degradation into L-glutamate; N-formimidoyl-L-glutamate from L-histidine: step 2/3. In terms of biological role, catalyzes the conversion of urocanate to 4-imidazolone-5-propionate. This is Urocanate hydratase from Bacillus anthracis (strain CDC 684 / NRRL 3495).